A 231-amino-acid polypeptide reads, in one-letter code: Protein OPG061 (231 aa).

This sequence belongs to the orthopoxvirus OPG058 family.

It localises to the host nucleus. Its subcellular location is the host nucleolus. This is Protein OPG061 (OPG061) from Vaccinia virus (strain L-IVP) (VACV).